The primary structure comprises 156 residues: CD-NTase/cGAS isopeptidase (156 aa).

Residues 16–156 (LVVIMGHVVT…LITVFKKIES (141 aa)) form the MPN domain. Glutamate 39 (proton donor/acceptor) is an active-site residue. Zn(2+) is bound by residues histidine 101, histidine 103, and aspartate 114. Positions 101 to 114 (HTHPEDRPFPSATD) match the JAMM motif motif.

It belongs to the peptidase M67B family. Cap3 isopeptidase subfamily. Requires Zn(2+) as cofactor.

With respect to regulation, cleavage of conjugated proteins is inhibited by EDTA. Functionally, metalloprotease priming reversal component of a CBASS system. CBASS (cyclic oligonucleotide-based antiphage signaling system) provides immunity against bacteriophages. The CD-NTase protein (DncV) synthesizes cyclic nucleotides in response to infection; these serve as specific second messenger signals. The signals activate a diverse range of effectors, leading to bacterial cell death and thus abortive phage infection. A type II-A(GA) CBASS system. Its function is as follows. Reverses the primed state of DncV, the CD-NTase. Cleaves a DncV-GFP (green fluorescent protein) fusion protein precisely at the C-terminus of DncV. Overexpression decreases the efficacy of CBASS protection against phages T2, T4, T5 and T6, blocks formation of DncV-conjugates in vivo, and inhibits in vivo activation of DncV. Antagonism of phage defense upon overexpression is CBASS-system specific, Cap3 from this bacteria only antagonizes its cognate CBASS system and not that of C.freundii, E.coli or E.hormaechei. Protects E.coli against phage infection. When the CBASS operon (capV-dncV-cap2-cap3) is introduced in E.coli MG1655 there is about 100-fold protection against phages P1 and T2. When the operon is introduced in E.coli MG1655 there is a more than 10(3) decrease in the efficiency of T2 plaque formation. Protects 100-fold against phage T5, offers no protection against T7. When the operon is introduced in E.coli MG1655 it protects against phages T2, T4, T5 and T6. Another paper shows the operon confers protection against phages P1, T2, T5 and T6 but not T4 or lambda. The sequence is that of CD-NTase/cGAS isopeptidase from Vibrio cholerae serotype O1 (strain ATCC 39315 / El Tor Inaba N16961).